The chain runs to 116 residues: Large ribosomal subunit protein bL17 (116 aa).

Belongs to the bacterial ribosomal protein bL17 family. In terms of assembly, part of the 50S ribosomal subunit. Contacts protein L32.

This chain is Large ribosomal subunit protein bL17, found in Rippkaea orientalis (strain PCC 8801 / RF-1) (Cyanothece sp. (strain PCC 8801)).